A 265-amino-acid polypeptide reads, in one-letter code: Tryptophan synthase alpha chain (265 aa).

Residues E49 and E60 each act as proton acceptor in the active site.

This sequence belongs to the TrpA family. In terms of assembly, tetramer of two alpha and two beta chains.

It carries out the reaction (1S,2R)-1-C-(indol-3-yl)glycerol 3-phosphate + L-serine = D-glyceraldehyde 3-phosphate + L-tryptophan + H2O. The protein operates within amino-acid biosynthesis; L-tryptophan biosynthesis; L-tryptophan from chorismate: step 5/5. Its function is as follows. The alpha subunit is responsible for the aldol cleavage of indoleglycerol phosphate to indole and glyceraldehyde 3-phosphate. The sequence is that of Tryptophan synthase alpha chain from Janthinobacterium sp. (strain Marseille) (Minibacterium massiliensis).